An 83-amino-acid polypeptide reads, in one-letter code: Apolipoprotein C-I, basic form (83 aa).

A signal peptide spans 1–26 (MRLFLSLPVLVVVLSMVLEGPAPAQG).

The protein belongs to the apolipoprotein C1 family.

Its subcellular location is the secreted. Inhibitor of lipoprotein binding to the low density lipoprotein (LDL) receptor, LDL receptor-related protein, and very low density lipoprotein (VLDL) receptor. Associates with high density lipoproteins (HDL) and the triacylglycerol-rich lipoproteins in the plasma and makes up about 10% of the protein of the VLDL and 2% of that of HDL. Appears to interfere directly with fatty acid uptake and is also the major plasma inhibitor of cholesteryl ester transfer protein (CETP). Binds free fatty acids and reduces their intracellular esterification. Modulates the interaction of APOE with beta-migrating VLDL and inhibits binding of beta-VLDL to the LDL receptor-related protein. This chain is Apolipoprotein C-I, basic form (APOC1B), found in Cercocebus atys (Sooty mangabey).